The chain runs to 291 residues: ATP synthase gamma chain (291 aa).

The protein belongs to the ATPase gamma chain family. F-type ATPases have 2 components, CF(1) - the catalytic core - and CF(0) - the membrane proton channel. CF(1) has five subunits: alpha(3), beta(3), gamma(1), delta(1), epsilon(1). CF(0) has three main subunits: a, b and c.

It localises to the cell inner membrane. Its function is as follows. Produces ATP from ADP in the presence of a proton gradient across the membrane. The gamma chain is believed to be important in regulating ATPase activity and the flow of protons through the CF(0) complex. This Cupriavidus pinatubonensis (strain JMP 134 / LMG 1197) (Cupriavidus necator (strain JMP 134)) protein is ATP synthase gamma chain.